The primary structure comprises 481 residues: Putative cytochrome P450 520B1 (481 aa).

Cys427 is a binding site for heme.

The protein belongs to the cytochrome P450 family. Heme is required as a cofactor.

The chain is Putative cytochrome P450 520B1 (cyp520B1) from Dictyostelium discoideum (Social amoeba).